Here is a 119-residue protein sequence, read N- to C-terminus: Beta-2-microglobulin (119 aa).

A signal peptide spans 1 to 20; sequence MARTVATFFLMLVSLACLDA. The 90-residue stretch at 25–114 folds into the Ig-like C1-type domain; that stretch reads PQVQVYTRHP…VTLKEPKVVT (90 aa). Cysteine 45 and cysteine 100 are oxidised to a cystine.

This sequence belongs to the beta-2-microglobulin family. As to quaternary structure, heterodimer of an alpha chain and a beta chain. Beta-2-microglobulin is the beta-chain of major histocompatibility complex class I molecules.

It localises to the secreted. Component of the class I major histocompatibility complex (MHC). Involved in the presentation of peptide antigens to the immune system. In Sigmodon hispidus (Hispid cotton rat), this protein is Beta-2-microglobulin (B2M).